The chain runs to 416 residues: MATQRRANPSSLHLITVFSLLVAVVSAEVFFEESFNDGWESRWVKSEWKKDENMAGEWNHTSGKWNGDANDKGIQTSEDYRFYAISAEFPEFSNKGKNLVFQFSVKHEQKLDCGGGYMKLLSGDVDQKKFGGDTPYSIMFGPDICGYSTKKVHAILTYNDTNHLIKKEVPCETDQLTHVYTFILRPDATYSILIDNVEKQSGSLYSDWDLLPPKTIKDPSAKKPEDWDEKEFIDDPEDKKPEGYDDIPEEITDPDAKKPEDWDDEEDGEWTAPTIPNPEYKGPWKPKKIKNPNYKGKWKAPLIDNPDFKDDPDLYVFPKLKYVGVELWQVKSGTLFDNIVICDDPEYAKAIAEETWGKQKDAEKAAFEEAEKKREEEESKAAPADSDAEEDDDADDDSDDADDKSESKDDEAHDEL.

Residues 1-27 (MATQRRANPSSLHLITVFSLLVAVVSA) form the signal peptide. N-linked (GlcNAc...) asparagine glycosylation is present at Asn-59. Residues Cys-113 and Cys-145 are joined by a disulfide bond. The an alpha-D-glucoside site is built by Tyr-117, Lys-119, Tyr-136, and Asp-143. Residue Asn-159 is glycosylated (N-linked (GlcNAc...) asparagine). Repeat copies occupy residues 199–210 (KQSGSLYSDWDL), 218–229 (DPSAKKPEDWDE), 235–246 (DPEDKKPEGYDD), 253–264 (DPDAKKPEDWDD), 268–278 (GEWTAPTIPNP), 282–292 (GPWKPKKIKNP), and 296–306 (GKWKAPLIDNP). Residues 199–264 (KQSGSLYSDW…DAKKPEDWDD (66 aa)) form a 4 X approximate repeats region. The span at 215 to 225 (TIKDPSAKKPE) shows a compositional bias: basic and acidic residues. The segment at 215–286 (TIKDPSAKKP…NPEYKGPWKP (72 aa)) is disordered. Composition is skewed to acidic residues over residues 226–236 (DWDEKEFIDDP) and 244–253 (YDDIPEEITD). The tract at residues 268–306 (GEWTAPTIPNPEYKGPWKPKKIKNPNYKGKWKAPLIDNP) is 3 X approximate repeats. Glu-326 lines the an alpha-D-glucoside pocket. The segment covering 355 to 380 (TWGKQKDAEKAAFEEAEKKREEEESK) has biased composition (basic and acidic residues). The segment at 355–416 (TWGKQKDAEK…SKDDEAHDEL (62 aa)) is disordered. Residues 386-403 (SDAEEDDDADDDSDDADD) are compositionally biased toward acidic residues. The segment covering 404–416 (KSESKDDEAHDEL) has biased composition (basic and acidic residues). The Prevents secretion from ER signature appears at 413–416 (HDEL).

This sequence belongs to the calreticulin family.

It localises to the endoplasmic reticulum lumen. In terms of biological role, molecular calcium-binding chaperone promoting folding, oligomeric assembly and quality control in the ER via the calreticulin/calnexin cycle. This lectin may interact transiently with almost all of the monoglucosylated glycoproteins that are synthesized in the ER. The sequence is that of Calreticulin (CAL1) from Nicotiana plumbaginifolia (Leadwort-leaved tobacco).